The sequence spans 205 residues: Probable peptidyl-tRNA hydrolase 2 (205 aa).

The span at 40–49 (YSSKNANKAS) shows a compositional bias: polar residues. Positions 40 to 68 (YSSKNANKASNPEKESPVSVSNDEDSESE) are disordered. 2 positions are modified to phosphoserine: Ser65 and Ser79.

Belongs to the PTH2 family.

It catalyses the reaction an N-acyl-L-alpha-aminoacyl-tRNA + H2O = an N-acyl-L-amino acid + a tRNA + H(+). Its function is as follows. The natural substrate for this enzyme may be peptidyl-tRNAs which drop off the ribosome during protein synthesis. This Schizosaccharomyces pombe (strain 972 / ATCC 24843) (Fission yeast) protein is Probable peptidyl-tRNA hydrolase 2.